The following is a 162-amino-acid chain: uncharacterized protein (162 aa).

Residues 1–19 (MARVYILFFSVFFVFPLFS) form the signal peptide. 2 helical membrane-spanning segments follow: residues 53–75 (LSIG…IRLI) and 105–127 (IVFG…YRAV).

The protein resides in the cell membrane. This is an uncharacterized protein from Treponema pallidum (strain Nichols).